The primary structure comprises 219 residues: MAAEISAKTVKELRDKTAAGMMDCKKALQESNGDFEQAMESLRKKGLASANKKSDRIATEGIIESYIHMGGKLGVLVEVNCETDFVARREEFQELAKNIAMQIAANPAVKFVSLKEIPQSIIDEEKKIELEKDDLSNKPQEIKEKIVEGRIQKRLNEMILLEQSFIRDSDITIEELVKRNIAILGENIQVRRFERFNLGEGLEKREDNFSEEVEKMKKK.

This sequence belongs to the EF-Ts family.

Its subcellular location is the plastid. It localises to the chloroplast. Its function is as follows. Associates with the EF-Tu.GDP complex and induces the exchange of GDP to GTP. It remains bound to the aminoacyl-tRNA.EF-Tu.GTP complex up to the GTP hydrolysis stage on the ribosome. This chain is Elongation factor Ts, chloroplastic (tsf), found in Rhodomonas salina (Cryptomonas salina).